A 265-amino-acid polypeptide reads, in one-letter code: Hemin import ATP-binding protein HmuV (265 aa).

One can recognise an ABC transporter domain in the interval 10 to 247 (LVARHLRFQT…ETLAHWYRAD (238 aa)). 42–49 (GPNGAGKS) is an ATP binding site.

It belongs to the ABC transporter superfamily. Heme (hemin) importer (TC 3.A.1.14.5) family. As to quaternary structure, the complex is composed of two ATP-binding proteins (HmuV), two transmembrane proteins (HmuU) and a solute-binding protein (HmuT).

It localises to the cell inner membrane. Part of the ABC transporter complex HmuTUV involved in hemin import. Responsible for energy coupling to the transport system. The sequence is that of Hemin import ATP-binding protein HmuV from Pectobacterium atrosepticum (strain SCRI 1043 / ATCC BAA-672) (Erwinia carotovora subsp. atroseptica).